The following is a 323-amino-acid chain: Thiamine-monophosphate kinase (323 aa).

Positions 30, 45, 46, and 47 each coordinate Mg(2+). Residue His-54 participates in substrate binding. Mg(2+) is bound by residues Asp-75 and Asp-122. ATP-binding positions include 121 to 122 (GD) and Arg-146. A Mg(2+)-binding site is contributed by Asp-212. Ser-214 is an ATP binding site. Residue Asp-215 coordinates Mg(2+). Substrate-binding residues include Glu-263 and Phe-319.

This sequence belongs to the thiamine-monophosphate kinase family.

It catalyses the reaction thiamine phosphate + ATP = thiamine diphosphate + ADP. It participates in cofactor biosynthesis; thiamine diphosphate biosynthesis; thiamine diphosphate from thiamine phosphate: step 1/1. Its function is as follows. Catalyzes the ATP-dependent phosphorylation of thiamine-monophosphate (TMP) to form thiamine-pyrophosphate (TPP), the active form of vitamin B1. This chain is Thiamine-monophosphate kinase, found in Buchnera aphidicola subsp. Acyrthosiphon pisum (strain APS) (Acyrthosiphon pisum symbiotic bacterium).